A 179-amino-acid polypeptide reads, in one-letter code: DELTA-actitoxin-Afr1c (179 aa).

Residues 1 to 29 form an N-terminal alpha-helix that contributes to the pore region; sequence SAEVAGAIIDGASLTFDVLQTVLKALGDV. The N-terminal region stretch occupies residues 11-30; that stretch reads GASLTFDVLQTVLKALGDVS. Arg31 provides a ligand contact to an N-(acyl)-sphingosylphosphocholine. N-acetyl-D-glucosamine 6-sulfate-binding residues include Tyr51 and Arg53. Residues Arg53, Ser54, Arg79, Gly85, Tyr113, Ser114, Trp116, Tyr133, Tyr137, Tyr138, Arg144, and Gly168 each coordinate an N-(acyl)-sphingosylphosphocholine. Positions 105–120 are trp-rich region, which is important for the binding to lipid membrane; that stretch reads SIPFDYNLYSNWWNVK. Tyr138 is an N-acetyl-D-glucosamine 6-sulfate binding site. Positions 144-146 match the Cell attachment site, crucial for protein stability motif; the sequence is RGD.

This sequence belongs to the actinoporin family. Sea anemone subfamily. In terms of assembly, octamer or nonamer in membranes. Monomer in the soluble state.

The protein resides in the secreted. It is found in the nematocyst. The protein localises to the target cell membrane. Pore-forming toxin (PFT) that consists of a crown-shaped octamer or nonamer that forms cation-selective hydrophilic pores of about 1.5 nm (inside) and 13 nm (outside) and causes cytolysis. It causes cardiac stimulation. Also causes hemolysis (HC(50)=0.3 nM). Interestingly, the Phe-16 is crucial for hemolysis. Pore formation is a multi-step process that involves specific recognition of membrane sphingomyelin (but neither cholesterol nor phosphatidylcholine) using aromatic rich region and adjacent phosphocholine (POC) binding site, firm binding to the membrane (mainly driven by hydrophobic interactions) accompanied by the transfer of the N-terminal region to the lipid-water interface and finally pore formation after oligomerization of monomers. It is probable that a dimeric form is an assembly intermediate before the complete oligomerization. The formation of stable pores occurs only in vesicles composed of DOPC/SM (there is no oligomerization when the PFT is treated with vesicles of DOPC or SM alone). The transmembrane pore displays 8 lateral perforations, one at each subunit-subunit interface, partially occupied by the acyl-chain region of a bridging lipid. Each pore contains 24 lipid molecules, firmly bound to each subunit, that is, 3 lipids (L1, L2, L3, L4 and/or L5) are associated to each subunit. Lipid L1 bridges 2 subunits, whereas lipids L2 and L3 bind to sites at single subunit. The sequence is that of DELTA-actitoxin-Afr1c from Actinia fragacea (Strawberry anemone).